We begin with the raw amino-acid sequence, 126 residues long: MAIWGLGTDIVEVARIEQSLARGNSLVKRVLTPKEQEEMTASVDEAAFLAKRFAAKEACSKAFGRGISAGLSFQHMQVVHNEYGKPEWHFTETAAQWVKEQGISGSHLSISDEKHYAVATVILETD.

Mg(2+) contacts are provided by aspartate 9 and glutamate 57.

This sequence belongs to the P-Pant transferase superfamily. AcpS family. The cofactor is Mg(2+).

Its subcellular location is the cytoplasm. It carries out the reaction apo-[ACP] + CoA = holo-[ACP] + adenosine 3',5'-bisphosphate + H(+). Its function is as follows. Transfers the 4'-phosphopantetheine moiety from coenzyme A to a Ser of acyl-carrier-protein. The chain is Holo-[acyl-carrier-protein] synthase from Idiomarina loihiensis (strain ATCC BAA-735 / DSM 15497 / L2-TR).